Here is a 213-residue protein sequence, read N- to C-terminus: Pyrrolidone-carboxylate peptidase (213 aa).

Residues Glu80, Cys143, and His165 contribute to the active site.

Belongs to the peptidase C15 family. In terms of assembly, homotetramer.

The protein resides in the cytoplasm. The catalysed reaction is Release of an N-terminal pyroglutamyl group from a polypeptide, the second amino acid generally not being Pro.. Functionally, removes 5-oxoproline from various penultimate amino acid residues except L-proline. In Erwinia tasmaniensis (strain DSM 17950 / CFBP 7177 / CIP 109463 / NCPPB 4357 / Et1/99), this protein is Pyrrolidone-carboxylate peptidase.